Here is a 665-residue protein sequence, read N- to C-terminus: Succinate dehydrogenase [ubiquinone] flavoprotein subunit B, mitochondrial (665 aa).

A mitochondrion-targeting transit peptide spans 1-45 (MALLKVAPSRLLSRALQLTSTLQNCTATSIAARRNFHFTVYGRKD). FAD-binding residues include A72, A75, T94, K95, and S101. Tele-8alpha-FAD histidine is present on H102. FAD contacts are provided by T103, G108, A224, and D278. Oxaloacetate is bound by residues H299, R343, and H410. R343 serves as the catalytic Proton acceptor. FAD is bound at residue E443. Residues R454 and A457 each contribute to the oxaloacetate site. Residues S459 and L460 each contribute to the FAD site.

This sequence belongs to the FAD-dependent oxidoreductase 2 family. FRD/SDH subfamily. In terms of assembly, component of complex II composed of four subunits: a flavoprotein (FP), an iron-sulfur protein (IP), and a cytochrome b composed of a large and a small subunit. FAD is required as a cofactor.

The protein localises to the mitochondrion inner membrane. The catalysed reaction is a ubiquinone + succinate = a ubiquinol + fumarate. The enzyme catalyses (R)-malate + a quinone = enol-oxaloacetate + a quinol. It catalyses the reaction (S)-malate + a quinone = enol-oxaloacetate + a quinol. It functions in the pathway carbohydrate metabolism; tricarboxylic acid cycle; fumarate from succinate (eukaryal route): step 1/1. Enol-oxaloacetate inhibits the succinate dehydrogenase activity. Its function is as follows. Flavoprotein (FP) subunit of succinate dehydrogenase (SDH) that is involved in complex II of the mitochondrial electron transport chain and is responsible for transferring electrons from succinate to ubiquinone (coenzyme Q). SDH also oxidizes malate to the non-canonical enol form of oxaloacetate, enol-oxaloacetate. Enol-oxaloacetate, which is a potent inhibitor of the succinate dehydrogenase activity, is further isomerized into keto-oxaloacetate. The polypeptide is Succinate dehydrogenase [ubiquinone] flavoprotein subunit B, mitochondrial (sdha-b) (Xenopus laevis (African clawed frog)).